The chain runs to 210 residues: Thymidylate kinase (210 aa).

9-16 contributes to the ATP binding site; the sequence is GLEGAGKS.

The protein belongs to the thymidylate kinase family.

It catalyses the reaction dTMP + ATP = dTDP + ADP. Functionally, phosphorylation of dTMP to form dTDP in both de novo and salvage pathways of dTTP synthesis. The chain is Thymidylate kinase from Aliivibrio salmonicida (strain LFI1238) (Vibrio salmonicida (strain LFI1238)).